The primary structure comprises 382 residues: Polyadenylate-binding protein 5 (382 aa).

RRM domains follow at residues 18 to 96, 106 to 182, 199 to 276, and 302 to 378; these read AALY…WSQP, GNIF…RFKF, TNVF…RAQK, and VPIY…LGQA.

It is found in the cytoplasm. Functionally, binds the poly(A) tail of mRNA. May be involved in cytoplasmic regulatory processes of mRNA metabolism. Can probably bind to cytoplasmic RNA sequences other than poly(A) in vivo. The polypeptide is Polyadenylate-binding protein 5 (PABPC5) (Gorilla gorilla gorilla (Western lowland gorilla)).